The primary structure comprises 1002 residues: E3 ubiquitin-protein ligase BRE1B (1002 aa).

The disordered stretch occupies residues 1–32; sequence MSGLSNKRAAGDGGSGPPEKKLNREEKTTTTL. Basic and acidic residues predominate over residues 18–28; sequence PEKKLNREEKT. Lys20 is modified (N6-acetyllysine). A Phosphoserine modification is found at Ser42. Residues 55 to 91 adopt a coiled-coil conformation; sequence KNKKLAERLEQRQACEDELRERIEKLEKRQATDDATL. Residues 120 to 148 are disordered; it reads SSGTEVPGCQEGLTRDVIPRTDPGTSDLR. Coiled-coil stretches lie at residues 190 to 378 and 438 to 526; these read KAAV…LRSL and LQKK…ASGS. N6-acetyllysine occurs at positions 356 and 518. Disordered stretches follow at residues 520-562 and 579-652; these read RAQA…PDSK and KKEE…ESEL. Residues Lys579 and Lys580 each participate in a glycyl lysine isopeptide (Lys-Gly) (interchain with G-Cter in SUMO2) cross-link. Residues Ser585 and Ser586 each carry the phosphoserine modification. 2 stretches are compositionally biased toward basic and acidic residues: residues 603–620 and 634–652; these read RGREPEARPKRELREREG and RADREKAKAEEARRKESEL. The stretch at 628–947 forms a coiled coil; it reads AASTLSRADR…EEIKEYKARL (320 aa). The RING-type zinc-finger motif lies at 949 to 988; the sequence is CPCCNTRKKDAVLTKCFHVFCFECVRGRYEARQRKCPKCN.

This sequence belongs to the BRE1 family. In terms of assembly, component of the RNF20/40 complex (also known as BRE1 complex) probably composed of 2 copies of RNF20/BRE1A and 2 copies of RNF40/BRE1B. Interacts with UBE2E1/UBCH6. Interacts with RB1 and WAC. May interact with STX1A. In terms of tissue distribution, ubiquitously expressed. Expressed in brain, testis, heart, liver and kidney. Weakly expressed in lung, spleen and skeletal muscle (at protein level).

Its subcellular location is the nucleus. The enzyme catalyses S-ubiquitinyl-[E2 ubiquitin-conjugating enzyme]-L-cysteine + [acceptor protein]-L-lysine = [E2 ubiquitin-conjugating enzyme]-L-cysteine + N(6)-ubiquitinyl-[acceptor protein]-L-lysine.. It functions in the pathway protein modification; protein ubiquitination. In terms of biological role, component of the RNF20/40 E3 ubiquitin-protein ligase complex that mediates monoubiquitination of 'Lys-120' of histone H2B (H2BK120ub1). H2BK120ub1 gives a specific tag for epigenetic transcriptional activation and is also prerequisite for histone H3 'Lys-4' and 'Lys-79' methylation (H3K4me and H3K79me, respectively). It thereby plays a central role in histone code and gene regulation. The RNF20/40 complex forms a H2B ubiquitin ligase complex in cooperation with the E2 enzyme UBE2A or UBE2B; reports about the cooperation with UBE2E1/UBCH are contradictory. Required for transcriptional activation of Hox genes. This Rattus norvegicus (Rat) protein is E3 ubiquitin-protein ligase BRE1B (Rnf40).